We begin with the raw amino-acid sequence, 428 residues long: MVEASLRVSGSTNPISGRIVANGAKNSALPIMAACLLLNGSVVLAGMPDLRDVTVMSELITSLGGRISFLRNTKEKANHKVEINCDNLHNWAIPHEITSQMRASCLTLGPILTRMGRAEVALPGGCSIGSRPLDMHIWALQKLGAKVEVCGNYVKCSSSGKLVGCHIDFQSVSVGATENALMAAVMAHGTTTISNAAIEPEVADLAHFLVKAGAQISGIGTRTLQICGVQQLSGPSHTIIRDRMEAGTYALAAISTGGSVHIAGVTSEMLGCLAHELEGMGGKVTDVPDGLVVLRHSPQINPVVLHTAPYPGFPSDMQAQFAATACLARGTSQIHEHVFDRRFSYARELAKMGADIHVQGNTASIRGVDKLHGASVQAPDLRASAALLIAGLSAQGVTTISNVQTLYRGYEAMEEKLRACGAEVELVR.

25 to 26 lines the phosphoenolpyruvate pocket; it reads KN. Position 102 (arginine 102) interacts with UDP-N-acetyl-alpha-D-glucosamine. Catalysis depends on cysteine 126, which acts as the Proton donor. Cysteine 126 is modified (2-(S-cysteinyl)pyruvic acid O-phosphothioketal). Positions 316 and 338 each coordinate UDP-N-acetyl-alpha-D-glucosamine.

It belongs to the EPSP synthase family. MurA subfamily.

It localises to the cytoplasm. The enzyme catalyses phosphoenolpyruvate + UDP-N-acetyl-alpha-D-glucosamine = UDP-N-acetyl-3-O-(1-carboxyvinyl)-alpha-D-glucosamine + phosphate. It participates in cell wall biogenesis; peptidoglycan biosynthesis. Its function is as follows. Cell wall formation. Adds enolpyruvyl to UDP-N-acetylglucosamine. The chain is UDP-N-acetylglucosamine 1-carboxyvinyltransferase from Anaplasma marginale (strain Florida).